The primary structure comprises 133 residues: MPISICKHGAPFVVQHENRYGSGASQSSSLSKSIRHISNSHEEIKFISCYSANGACFSNAQMLANASGRPVIGYYGKINKLTASLDNSGRIFRPQHKLAANICYVGNRLLSAPVQLGFGLKHLLTCHSNGNVR.

It localises to the secreted. The protein resides in the host cytoplasm. In terms of biological role, effector proteins function to alter host cell physiology and promote bacterial survival in host tissues. This is Secreted effector protein SteB (steB) from Salmonella typhimurium (strain 14028s / SGSC 2262).